The following is a 1133-amino-acid chain: Eukaryotic translation initiation factor 3 subunit A (1133 aa).

The PCI domain occupies 317 to 498 (IQRMTSHVLI…HCVHFGTDLS (182 aa)). 2 coiled-coil regions span residues 573–700 (KKIE…YFER) and 784–886 (EEER…EADS). Positions 810–893 (KEEERRRAEE…ADSWRDRRGG (84 aa)) are enriched in basic and acidic residues. The disordered stretch occupies residues 810-1133 (KEEERRRAEE…DGWTDVKHHR (324 aa)). Residues 895–909 (APAAAAQPNPAAQEA) show a composition bias toward low complexity. 3 stretches are compositionally biased toward basic and acidic residues: residues 920–944 (GAREPRGEDAPKKDGVYQPRFRDVR), 954–1081 (VERR…DSAW), and 1097–1117 (TRQDQAKPKDDRREERPKEAR).

This sequence belongs to the eIF-3 subunit A family. Component of the eukaryotic translation initiation factor 3 (eIF-3) complex.

The protein localises to the cytoplasm. Functionally, RNA-binding component of the eukaryotic translation initiation factor 3 (eIF-3) complex, which is involved in protein synthesis of a specialized repertoire of mRNAs and, together with other initiation factors, stimulates binding of mRNA and methionyl-tRNAi to the 40S ribosome. The eIF-3 complex specifically targets and initiates translation of a subset of mRNAs involved in cell proliferation. In Aedes aegypti (Yellowfever mosquito), this protein is Eukaryotic translation initiation factor 3 subunit A.